The sequence spans 322 residues: Tropinone reductase homolog At2g29260, chloroplastic (322 aa).

The transit peptide at 1–61 (MVLDMASHLY…YASQSSIAIT (61 aa)) directs the protein to the chloroplast. 74-98 (LVTGGTRGIGRAIVEELAGLGAEVH) provides a ligand contact to NADP(+). Position 207 (Ser-207) interacts with substrate.

Belongs to the short-chain dehydrogenases/reductases (SDR) family. SDR65C subfamily.

The protein localises to the plastid. It is found in the chloroplast. The polypeptide is Tropinone reductase homolog At2g29260, chloroplastic (Arabidopsis thaliana (Mouse-ear cress)).